Reading from the N-terminus, the 342-residue chain is Leucine-rich repeat-containing protein 23 (342 aa).

The segment covering 1 to 30 (MSDEDDLEDFETDQDDLEREDDEKETEEWE) has biased composition (acidic residues). Residues 1 to 42 (MSDEDDLEDFETDQDDLEREDDEKETEEWEDYRKEGEESEDW) form a disordered region. Residues 3–27 (DEDDLEDFETDQDDLEREDDEKETE) adopt a coiled-coil conformation. LRR repeat units follow at residues 91–112 (HLRY…NHLT), 113–133 (NLLW…NELP), 134–154 (YLQI…ISHP), 155–176 (RLAS…DPQK), 179–199 (SLHT…INLP), 200–221 (KLKN…ENLS), 222–243 (NLTT…SKEM), and 245–266 (SLQY…AKLR). Positions 207–342 (AQNMLKKVEG…PESELDQSST (136 aa)) are interaction with RSPH9. The LRRCT domain maps to 279 to 317 (NPCTDENDYRQEALVQIAHLERLDKEFYEEEERAEADEI). Residues 306-332 (YEEEERAEADEIRQRMKEEQEQEAEVE) adopt a coiled-coil conformation. Residues 307–342 (EEEERAEADEIRQRMKEEQEQEAEVEPESELDQSST) form a disordered region. Residues 314 to 324 (ADEIRQRMKEE) show a composition bias toward basic and acidic residues. A compositionally biased stretch (acidic residues) spans 325–342 (QEQEAEVEPESELDQSST).

Component of the axonemal radial spoke complex. Interacts with RSPH3. Interacts with RSPH9.

Its subcellular location is the cytoplasm. The protein resides in the cytoskeleton. It localises to the flagellum axoneme. Functionally, essential for sperm motility and male fertility. Plays an important role in the proper assembly of the third radial spoke (RS3) head and the bridge structure between RS2 and RS3 in the sperm flagella. This chain is Leucine-rich repeat-containing protein 23 (LRRC23), found in Bos taurus (Bovine).